A 205-amino-acid chain; its full sequence is dTTP/UTP pyrophosphatase (205 aa).

The Proton acceptor role is filled by D66.

It belongs to the Maf family. YhdE subfamily. A divalent metal cation is required as a cofactor.

Its subcellular location is the cytoplasm. The enzyme catalyses dTTP + H2O = dTMP + diphosphate + H(+). It catalyses the reaction UTP + H2O = UMP + diphosphate + H(+). In terms of biological role, nucleoside triphosphate pyrophosphatase that hydrolyzes dTTP and UTP. May have a dual role in cell division arrest and in preventing the incorporation of modified nucleotides into cellular nucleic acids. The chain is dTTP/UTP pyrophosphatase from Anaeromyxobacter sp. (strain Fw109-5).